Here is a 45-residue protein sequence, read N- to C-terminus: Amphipathic peptide Hj0164 (45 aa).

The signal sequence occupies residues 1 to 23; sequence MKSQAFFLLFLVVLLLATTQSEA. Phenylalanine 33 carries the phenylalanine amide modification. Residues 37–45 constitute a propeptide that is removed on maturation; it reads SLRDVDTMK.

The protein belongs to the non-disulfide-bridged peptide (NDBP) superfamily. Short antimicrobial peptide (group 4) family. In terms of tissue distribution, expressed by the venom gland.

It is found in the secreted. Its subcellular location is the target cell membrane. Its function is as follows. Amphipathic peptide that shows antibacterial activities. The sequence is that of Amphipathic peptide Hj0164 from Hottentotta judaicus (Black scorpion).